We begin with the raw amino-acid sequence, 722 residues long: Serine/threonine-protein kinase dkf-1 (722 aa).

2 consecutive Phorbol-ester/DAG-type zinc fingers follow at residues 98–148 (PHVV…RNNC) and 186–236 (PHTL…ASNC). The PH domain maps to 279–407 (KKLEGWMMHF…QFIKESLQPP (129 aa)). The Protein kinase domain occupies 426 to 685 (VLSDKTLGSG…IEQCLDHGWL (260 aa)). Residues 432-440 (LGSGQFGTV) and lysine 455 contribute to the ATP site. The active-site Proton acceptor is the aspartate 551. Threonine 588 is subject to Phosphothreonine.

The protein belongs to the protein kinase superfamily. CAMK Ser/Thr protein kinase family. PKD subfamily. It depends on Mg(2+) as a cofactor. In terms of processing, prolonged phosphorylation at Thr-588 results in ubiquitination and degradation. Highly expressed in embryos and at lower levels through the four larval stages in adults. Present in a region bounded by the anterior and posterior bulbs of the pharynx and an area of the tail containing the lumbar, dorsorectal and pre-anal ganglia. Expressed in neurons.

The protein resides in the cytoplasm. Its subcellular location is the membrane. It carries out the reaction L-seryl-[protein] + ATP = O-phospho-L-seryl-[protein] + ADP + H(+). The enzyme catalyses L-threonyl-[protein] + ATP = O-phospho-L-threonyl-[protein] + ADP + H(+). Activated by DAG and phorbol esters. Phorbol-ester/DAG-type domain 1 binds phorbol ester with high affinity and mediates accumulation at the cell periphery. Phorbol-ester/DAG-type domain 2 binds phorbol ester with low affinity but may mediate initial contact, resulting in a conformational change allowing previously occluded domain 1 to anchor the kinase. Phosphorylation on Thr-588 is then also required for activation and may also result in a further conformational change. In terms of biological role, converts transient diacylglycerol (DAG) signals into prolonged physiological effects, independently of PKC. Role in the regulation of growth and neuromuscular control of movement. Involved in immune response to S.aureus bacterium by activating transcription factor hlh-30 downstream of phospholipase plc-1. The polypeptide is Serine/threonine-protein kinase dkf-1 (dkf-1) (Caenorhabditis elegans).